A 681-amino-acid polypeptide reads, in one-letter code: Proton channel OTOP3 (681 aa).

Residues 1 to 25 (MLSKEEPACRQFHSREKTWGNEHNG) are compositionally biased toward basic and acidic residues. A disordered region spans residues 1-26 (MLSKEEPACRQFHSREKTWGNEHNGK). Over 1 to 112 (MLSKEEPACR…LHQRAKKTGR (112 aa)) the chain is Cytoplasmic. The helical transmembrane segment at 113-133 (LFSGLFGLNLMFLGGTVVSSV) threads the bilayer. The Extracellular portion of the chain corresponds to 134-143 (ALSNKAVPER). Residues 144 to 166 (DSQSFLCILMLLSSVWALYHLLF) form a helical membrane-spanning segment. The Cytoplasmic portion of the chain corresponds to 167-182 (IRNQNGAVHHDHHAGA). Residues 183–204 (MWLKASLAIFGVCSIILSIFEI) form a helical membrane-spanning segment. Topologically, residues 205 to 216 (GHALLLQNCEIL) are extracellular. Residues 217–240 (MDIVFFSIEIVFVSVQTVLLWVSC) form a helical membrane-spanning segment. Residues 241-248 (KDCVQMHH) are Cytoplasmic-facing. A helical membrane pass occupies residues 249–271 (SVTRYGIMLTLATDILLWLTAVI). Over 272–317 (DDSLEQDLEILQSNSTQDESNEMAQCQCPTDSMCWGLKQGYVTMFP) the chain is Extracellular. A helical transmembrane segment spans residues 318–334 (FNIEYSLICATLLFIMW). Over 335–358 (KNVGRREKLHSDPPRHTFQLRGII) the chain is Cytoplasmic. The helical transmembrane segment at 359-378 (YGPLIGGAALLVGISVFVQY) threads the bilayer. Residues 379–392 (QVEATSGMVSILSY) lie on the Extracellular side of the membrane. The helical transmembrane segment at 393 to 415 (HMYYGYKMIILAPMIVCSVAGII) threads the bilayer. The Cytoplasmic portion of the chain corresponds to 416–507 (AHSLREKEKK…QGKMKNYTRK (92 aa)). A helical transmembrane segment spans residues 508 to 529 (LDVTLLFVSAVGQLGISYFSII). Residues 530–540 (ATVVTTPWTML) lie on the Extracellular side of the membrane. Residues 541 to 563 (SALNFSNSLLLILQYLSQTMFII) form a helical membrane-spanning segment. Over 564-614 (ESMRSIHEEEKEKPGHHEESHRRMSVQEMHKAPPSCLDAGHLGLSRRVVKE) the chain is Cytoplasmic. A helical membrane pass occupies residues 615–632 (MAMFLMICNIMCWILGAF). Topologically, residues 633–651 (GAHPLYMNGLERQLYGSGI) are extracellular. Residues 652–674 (WLAILNIGLPLSVFYRMHSVGIL) traverse the membrane as a helical segment. At 675–681 (LEVYLHA) the chain is on the cytoplasmic side.

The protein belongs to the otopetrin family. As to quaternary structure, homodimer.

It localises to the cell membrane. The enzyme catalyses H(+)(in) = H(+)(out). Its activity is regulated as follows. pH regulates the proton channel activity from both sides of the plasma membrane. Low pH activates the channel from the extracellular side but inactivates the channel on the intracellular side. Zn(2+) and Ca(2+) can partially block the channel. In terms of biological role, proton-selective channel gated by extracellular protons. In Xenopus tropicalis (Western clawed frog), this protein is Proton channel OTOP3 (otop3).